The chain runs to 250 residues: Probable aquaporin TIP-type (250 aa).

Transmembrane regions (helical) follow at residues 20–42 and 55–77; these read AYVA…AIAY and GLVA…AANV. The short motif at 83-85 is the NPA 1 element; that stretch reads NPA. Transmembrane regions (helical) follow at residues 97–119, 140–162, and 172–194; these read TILT…CLLL, IQGV…ATAA, and IAPI…FSGG. Residues 197–199 carry the NPA 2 motif; it reads NPA. The helical transmembrane segment at 215–237 threads the bilayer; it reads WIYWAGPLIGGALAGFIYGDVFI.

The protein belongs to the MIP/aquaporin (TC 1.A.8) family. TIP (TC 1.A.8.10) subfamily. Expressed in mature seeds and dark-grown seedlings.

It is found in the vacuole membrane. Its function is as follows. Channel protein in tonoplast. These proteins may allow the diffusion of amino acids and/or peptides from the vacuolar compartment to the cytoplasm. This is Probable aquaporin TIP-type (DIP) from Antirrhinum majus (Garden snapdragon).